Consider the following 345-residue polypeptide: S-adenosylmethionine:tRNA ribosyltransferase-isomerase (345 aa).

The protein belongs to the QueA family. As to quaternary structure, monomer.

It localises to the cytoplasm. The enzyme catalyses 7-aminomethyl-7-carbaguanosine(34) in tRNA + S-adenosyl-L-methionine = epoxyqueuosine(34) in tRNA + adenine + L-methionine + 2 H(+). Its pathway is tRNA modification; tRNA-queuosine biosynthesis. Its function is as follows. Transfers and isomerizes the ribose moiety from AdoMet to the 7-aminomethyl group of 7-deazaguanine (preQ1-tRNA) to give epoxyqueuosine (oQ-tRNA). This is S-adenosylmethionine:tRNA ribosyltransferase-isomerase from Helicobacter pylori (strain HPAG1).